The primary structure comprises 209 residues: Uracil phosphoribosyltransferase (209 aa).

5-phospho-alpha-D-ribose 1-diphosphate-binding positions include Arg79, Arg104, and 131–139; that span reads DPMLATGGS. Residues Ile194 and 199-201 contribute to the uracil site; that span reads GDA. Residue Asp200 participates in 5-phospho-alpha-D-ribose 1-diphosphate binding.

This sequence belongs to the UPRTase family. Requires Mg(2+) as cofactor.

The catalysed reaction is UMP + diphosphate = 5-phospho-alpha-D-ribose 1-diphosphate + uracil. The protein operates within pyrimidine metabolism; UMP biosynthesis via salvage pathway; UMP from uracil: step 1/1. With respect to regulation, allosterically activated by GTP. Its function is as follows. Catalyzes the conversion of uracil and 5-phospho-alpha-D-ribose 1-diphosphate (PRPP) to UMP and diphosphate. The protein is Uracil phosphoribosyltransferase of Streptococcus equi subsp. zooepidemicus (strain MGCS10565).